Here is a 263-residue protein sequence, read N- to C-terminus: Proteasome subunit alpha (263 aa).

The interval 229–263 is disordered; the sequence is AALLQDTPPDDADADADAGKKPANDGNLPPNDDKS.

It belongs to the peptidase T1A family. In terms of assembly, the 20S proteasome core is composed of 14 alpha and 14 beta subunits that assemble into four stacked heptameric rings, resulting in a barrel-shaped structure. The two inner rings, each composed of seven catalytic beta subunits, are sandwiched by two outer rings, each composed of seven alpha subunits. The catalytic chamber with the active sites is on the inside of the barrel. Has a gated structure, the ends of the cylinder being occluded by the N-termini of the alpha-subunits. Is capped by the proteasome-associated ATPase, ARC.

It localises to the cytoplasm. It participates in protein degradation; proteasomal Pup-dependent pathway. The formation of the proteasomal ATPase ARC-20S proteasome complex, likely via the docking of the C-termini of ARC into the intersubunit pockets in the alpha-rings, may trigger opening of the gate for substrate entry. Interconversion between the open-gate and close-gate conformations leads to a dynamic regulation of the 20S proteasome proteolysis activity. In terms of biological role, component of the proteasome core, a large protease complex with broad specificity involved in protein degradation. This is Proteasome subunit alpha from Actinosynnema mirum (strain ATCC 29888 / DSM 43827 / JCM 3225 / NBRC 14064 / NCIMB 13271 / NRRL B-12336 / IMRU 3971 / 101).